Here is a 457-residue protein sequence, read N- to C-terminus: Alkylcitrate synthase phiJ (457 aa).

Active-site residues include His328 and Asp384.

This sequence belongs to the citrate synthase family.

The catalysed reaction is (2E,10E)-dode-2,10-dicenoyl-CoA + oxaloacetate + H2O = (4E,11E)-2-hydroxytrideca-4,11-dien-1,2,3-tricarboxylate + CoA + H(+). Its pathway is secondary metabolite biosynthesis. In terms of biological role, alkylcitrate synthase; part of the gene cluster that mediates the biosynthesis of the antihypercholesterolemic agents phomoidrides which are dimeric anhydrides. Within the pathway, the alkylcitrate synthase (ACS) phiJ and the alkylcitrate dehydratase (ACDH) phiI produce the decarboxylated monomeric anhydrides by coupling the C12-fatty acyl product from phiA with oxalacetic acid. The pathway begins with the highly reducing polyketide synthase phiA that catalyzes the formation of a C12-fatty acyl-ACP, starting from one acetate and 5 malonate units. The hydrolase phiM is involved in the release of the C12-fatty acyl chain from phiA. The alkylcitrate synthase (ACS) phiJ and the alkylcitrate dehydratase (ACDH) phiI then give rise to decarboxylated monomeric anhydrides by coupling the C12-fatty acyl chain with oxalacetic acid. The cyclase phiC is responsible for the dimerization of the monomeric anhydrides which leads to the production of prephomoidride that contains the characteristic bicyclo[4.3.1]deca-1,6-diene system of phomoidrides. Iterative oxidation catalyzed by the alpha-ketoglutarate-dependent dioxygenase phiK produced then phomoidride A. Finally, the methyltransferase phiE converts phomoidride A to phomoidride B via an acetalization reaction. The phosphatidylethanolamine-binding protein phiB and phiN are not essential for dimerization and their functions have still to be determined. This is Alkylcitrate synthase phiJ from Fungal sp. (strain ATCC 74256).